The following is a 472-amino-acid chain: Aspartyl/glutamyl-tRNA(Asn/Gln) amidotransferase subunit B (472 aa).

This sequence belongs to the GatB/GatE family. GatB subfamily. Heterotrimer of A, B and C subunits.

It carries out the reaction L-glutamyl-tRNA(Gln) + L-glutamine + ATP + H2O = L-glutaminyl-tRNA(Gln) + L-glutamate + ADP + phosphate + H(+). The catalysed reaction is L-aspartyl-tRNA(Asn) + L-glutamine + ATP + H2O = L-asparaginyl-tRNA(Asn) + L-glutamate + ADP + phosphate + 2 H(+). In terms of biological role, allows the formation of correctly charged Asn-tRNA(Asn) or Gln-tRNA(Gln) through the transamidation of misacylated Asp-tRNA(Asn) or Glu-tRNA(Gln) in organisms which lack either or both of asparaginyl-tRNA or glutaminyl-tRNA synthetases. The reaction takes place in the presence of glutamine and ATP through an activated phospho-Asp-tRNA(Asn) or phospho-Glu-tRNA(Gln). This chain is Aspartyl/glutamyl-tRNA(Asn/Gln) amidotransferase subunit B, found in Campylobacter jejuni subsp. jejuni serotype O:23/36 (strain 81-176).